The chain runs to 475 residues: Beta-amyrin 28-monooxygenase (475 aa).

A helical membrane pass occupies residues 2–22 (YLTILFLFVSSILLSLMFLLR). Residue cysteine 422 coordinates heme.

Belongs to the cytochrome P450 family. Heme is required as a cofactor.

The protein localises to the membrane. It catalyses the reaction beta-amyrin + 3 reduced [NADPH--hemoprotein reductase] + 3 O2 = oleanolate + 3 oxidized [NADPH--hemoprotein reductase] + 4 H2O + 4 H(+). Its function is as follows. Catalyzes the oxidation of the methyl group to a carboxyl group at the C-28 position of beta-amyrin to form oleanolate. The chain is Beta-amyrin 28-monooxygenase from Barbarea vulgaris (Yellow rocket).